The primary structure comprises 348 residues: Protein RecA (348 aa).

65-72 (GPESSGKT) lines the ATP pocket.

This sequence belongs to the RecA family.

The protein resides in the cytoplasm. Its function is as follows. Can catalyze the hydrolysis of ATP in the presence of single-stranded DNA, the ATP-dependent uptake of single-stranded DNA by duplex DNA, and the ATP-dependent hybridization of homologous single-stranded DNAs. It interacts with LexA causing its activation and leading to its autocatalytic cleavage. The chain is Protein RecA from Vibrio natriegens.